A 698-amino-acid polypeptide reads, in one-letter code: RNA cytosine-C(5)-methyltransferase NSUN2 (698 aa).

The span at 1–10 shows a compositional bias: basic residues; the sequence is MGRKNRRNRQ. The segment at 1-28 is disordered; sequence MGRKNRRNRQRRTEQRSPAEEERRKARE. Positions 11 to 28 are enriched in basic and acidic residues; sequence RRTEQRSPAEEERRKARE. Residues 182-188, D213, D240, and D266 each bind S-adenosyl-L-methionine; that span reads CAAPGSK. Residue C319 is the Nucleophile of the active site. A disordered region spans residues 472-496; it reads AVDAENGETKPCTNQSGSSKTDSVC. The segment covering 482-493 has biased composition (polar residues); the sequence is PCTNQSGSSKTD.

It belongs to the class I-like SAM-binding methyltransferase superfamily. RsmB/NOP family. TRM4 subfamily.

The protein localises to the nucleus. It localises to the nucleolus. The protein resides in the cytoplasm. It is found in the mitochondrion. Its subcellular location is the cytoskeleton. The protein localises to the spindle. It localises to the secreted. The protein resides in the extracellular exosome. The enzyme catalyses cytidine(48) in tRNA + S-adenosyl-L-methionine = 5-methylcytidine(48) in tRNA + S-adenosyl-L-homocysteine + H(+). It catalyses the reaction cytidine(49) in tRNA + S-adenosyl-L-methionine = 5-methylcytidine(49) in tRNA + S-adenosyl-L-homocysteine + H(+). The catalysed reaction is cytidine(50) in tRNA + S-adenosyl-L-methionine = 5-methylcytidine(50) in tRNA + S-adenosyl-L-homocysteine + H(+). It carries out the reaction cytidine(34) in tRNA precursor + S-adenosyl-L-methionine = 5-methylcytidine(34) in tRNA precursor + S-adenosyl-L-homocysteine + H(+). The enzyme catalyses a cytidine in mRNA + S-adenosyl-L-methionine = a 5-methylcytidine in mRNA + S-adenosyl-L-homocysteine + H(+). RNA cytosine C(5)-methyltransferase that methylates cytosine to 5-methylcytosine (m5C) in various RNAs, such as tRNAs, mRNAs and some long non-coding RNAs (lncRNAs). Involved in various processes, such as epidermal stem cell differentiation, testis differentiation and maternal to zygotic transition during early development: acts by increasing protein synthesis; cytosine C(5)-methylation promoting tRNA stability and preventing mRNA decay. Methylates cytosine to 5-methylcytosine (m5C) at positions 34 and 48 of intron-containing tRNA(Leu)(CAA) precursors, and at positions 48, 49 and 50 of tRNA(Gly)(GCC) precursors. tRNA methylation is required generation of RNA fragments derived from tRNAs (tRFs). Also mediates C(5)-methylation of mitochondrial tRNAs. Catalyzes cytosine C(5)-methylation of mRNAs, leading to stabilize them and prevent mRNA decay. Cytosine C(5)-methylation of mRNAs also regulates mRNA export. Also mediates cytosine C(5)-methylation of non-coding RNAs, such as vault RNAs (vtRNAs), promoting their processing into regulatory small RNAs. Required for proper spindle assembly and chromosome segregation, independently of its methyltransferase activity. This is RNA cytosine-C(5)-methyltransferase NSUN2 from Xenopus laevis (African clawed frog).